The chain runs to 122 residues: Large ribosomal subunit protein bL12 (122 aa).

Belongs to the bacterial ribosomal protein bL12 family. In terms of assembly, homodimer. Part of the ribosomal stalk of the 50S ribosomal subunit. Forms a multimeric L10(L12)X complex, where L10 forms an elongated spine to which 2 to 4 L12 dimers bind in a sequential fashion. Binds GTP-bound translation factors.

In terms of biological role, forms part of the ribosomal stalk which helps the ribosome interact with GTP-bound translation factors. Is thus essential for accurate translation. This Pseudomonas entomophila (strain L48) protein is Large ribosomal subunit protein bL12.